A 250-amino-acid polypeptide reads, in one-letter code: Ubiquinone/menaquinone biosynthesis C-methyltransferase UbiE (250 aa).

Residues S73, D94, and 122–123 (NA) contribute to the S-adenosyl-L-methionine site.

Belongs to the class I-like SAM-binding methyltransferase superfamily. MenG/UbiE family.

It carries out the reaction a 2-demethylmenaquinol + S-adenosyl-L-methionine = a menaquinol + S-adenosyl-L-homocysteine + H(+). The enzyme catalyses a 2-methoxy-6-(all-trans-polyprenyl)benzene-1,4-diol + S-adenosyl-L-methionine = a 5-methoxy-2-methyl-3-(all-trans-polyprenyl)benzene-1,4-diol + S-adenosyl-L-homocysteine + H(+). The protein operates within quinol/quinone metabolism; menaquinone biosynthesis; menaquinol from 1,4-dihydroxy-2-naphthoate: step 2/2. It participates in cofactor biosynthesis; ubiquinone biosynthesis. Its function is as follows. Methyltransferase required for the conversion of demethylmenaquinol (DMKH2) to menaquinol (MKH2) and the conversion of 2-polyprenyl-6-methoxy-1,4-benzoquinol (DDMQH2) to 2-polyprenyl-3-methyl-6-methoxy-1,4-benzoquinol (DMQH2). This chain is Ubiquinone/menaquinone biosynthesis C-methyltransferase UbiE, found in Legionella pneumophila (strain Lens).